We begin with the raw amino-acid sequence, 508 residues long: Purine-cytosine permease fcyB (508 aa).

Residues 1-72 (MAGAFDFDLE…AEQTDTSVFN (72 aa)) are Cytoplasmic-facing. A helical membrane pass occupies residues 73-93 (IGSMWLAANMVVSSFAIGVLG). Over 94–104 (KSVYSLGFVDA) the chain is Extracellular. The helical transmembrane segment at 105–125 (ILTVLFFNLLGIMTVCFFSCF) threads the bilayer. The Cytoplasmic segment spans residues 126–147 (GPFGLRQMVFSRLWFGWYVTKG). The helical transmembrane segment at 148–168 (FAVLNILACLGWSAANAIVGA) threads the bilayer. At 169 to 177 (QMLHAVNSD) the chain is on the extracellular side. A helical membrane pass occupies residues 178-198 (VPGFAAILIISICTLLVTFAG). At 199-200 (YK) the chain is on the cytoplasmic side. Residues 201–221 (VVHLYEYWSWIPTFIVFMIIL) traverse the membrane as a helical segment. Over 222–243 (GTFAHSGDFQNIPMGVGTSEMG) the chain is Extracellular. The helical transmembrane segment at 244 to 264 (SVLSFGSAVYGFATGWTSYAA) threads the bilayer. At 265 to 278 (DYTVYQPANRSKRK) the chain is on the cytoplasmic side. A helical membrane pass occupies residues 279–299 (IFLSTWLGLIVPLLFVEMLGV). Topologically, residues 300 to 323 (AVMTATDIKGSKYDVGYATSGNGG) are extracellular. The helical transmembrane segment at 324-344 (LIAAVLQPLGGFGDFCLVILA) threads the bilayer. At 345–374 (LSIVANNCPNFYSVALTVQVLSRYAQRVPR) the chain is on the cytoplasmic side. A helical transmembrane segment spans residues 375 to 395 (FIWTLFGTGVSIAIAIPGYSH). Residues 396 to 404 (FETVLENFM) lie on the Extracellular side of the membrane. A helical membrane pass occupies residues 405 to 425 (NFIAYWLAIYSAIAIMDHFVF). Over 426-442 (KRGFSGYVVENFDKREK) the chain is Cytoplasmic. A helical transmembrane segment spans residues 443 to 463 (LPVGIAATIAFGFGVAGMITG). The Extracellular segment spans residues 464–477 (MSQPWYVGPIARHA). The helical transmembrane segment at 478–498 (AGGDVGFELGFAFAAFSYLCL) threads the bilayer. Topologically, residues 499-508 (RPFEIKFFGR) are cytoplasmic.

This sequence belongs to the purine-cytosine permease (2.A.39) family.

The protein localises to the cell membrane. Its function is as follows. This permease has a broad specificity towards purines, and also transports cytosine, but neither uracil nor thymine. Contributes very little in purine uptake. Its major role may be the uptake of cytosine. The protein is Purine-cytosine permease fcyB (fcyB) of Emericella nidulans (strain FGSC A4 / ATCC 38163 / CBS 112.46 / NRRL 194 / M139) (Aspergillus nidulans).